The following is a 1279-amino-acid chain: MRRHTLAIAILAALASTASVAETSDPQSLLIEQGYYWQSKKNPERALETWQKLLRLSPDQPDALYGIGLIQVQQNHPAEAQKYLARLQALSPVPRQALQLEQDITVAVPDNAKLLEQARELGEPEAEREQAVALYRQIFQGRQPQGLIAREYYNTLGFTAKGSSEAIAGLQRLTRERPNDPIVALFLAKHLARNPATRPDGIRALAKLASNNDVGGNADETWRFALVWLGPPKPDQVSLFQQFLTVHPDDSEIRALMNKGIAQGKGGGTWQRDPQMTKAFKALDDGDLKTAEPLLAARLAQKSNDVDALGGMGVLRQQQERYSEAENYLVQATRLPGGAAWQSALNDVRYWNLISQSRDAQRAGRSAQARDLVAQAERLNPGQPGAAIALAGFQAQDNQFDDAEAGYRKVLARHPGDPDALSGLINVLSQSGQPDEALKLIDSVSPAQRAKFAPSVKINALRATQVGKLAEQRGDLKAAQAAYRQALDADPENPWTRFALARMYLRDGQIRNARALIDGLLKSQPNQPDALYTSTLLSAQLSEWKQAEATLGRIPTAQRTADMNELATDIALHQQTDIAIETARRGQRPEALALLGRSEPLTRNKPERVAVLAAAYVEVGAAQYGLDMMQKVVENNPNPTVDQKLLYANVLLKANKYSEAGEILREVQGQPLTETGRQRYDDLIYLYRVKQADALREKNDLVAAYDMLSPALAQRPNDALGVGALARMYAASGNGKKAMELYAPLIQQNPNNARLQLGLADIALKGNDRGLAQSASDKALALEPGNPEILTSAARIYQGLGKNSEAAELLRKALAIENAMKAKTQVAQASAPGTSYNPFVGLPGQRRQVTDLTVAGAVPPPIDAPTKSVTSNAFASATSNDLSDPFVPPSSIASIDSPELSPARRALDTILRDRTGYVVQGLSVRSNNGEKGLSKITDVEAPFEARMPVGDNTVALRVTPVHLSAGSVKAESLSRFGKGGTEPAGSQSDSGVGLAVAFENPDQGLKADVGVSPLGFLYNTLVGGVSVSRPFEANSNFRYGANISRRPVTDSVTSFAGSEDGAGNKWGGVTANGGRGELSYDNQKLGVYGYASLHELLGNNVEDNTRLELGSGIYWYLRNNPRDTLTLGISGSAMTFKENQDFYTYGNGGYFSPQRFFSLGVPIRWAQSFDRFSYQVKSSVGLQHIAQDGADYFPGDSTLQATKNNPKYDSTSKTGVGYSFNAAAEYRLSSRFYLGGEIGLDNAQDYRQYAGNAYLRYLFEDLSGPMPLPVSPYRSPYSN.

Positions 1–21 (MRRHTLAIAILAALASTASVA) are cleaved as a signal peptide. TPR repeat units follow at residues 27-60 (QSLL…SPDQ), 62-94 (DALY…SPVP), 218-250 (ADET…HPDD), 306-339 (VDAL…PGGA), 384-417 (PGAA…HPGD), 460-493 (ALRA…DPEN), 495-527 (WTRF…QPNQ), 606-639 (PERV…NPNP), 719-752 (ALGV…NPNN), and 787-820 (PEIL…ENAM).

It participates in glycan metabolism; bacterial cellulose biosynthesis. Functionally, required for maximal bacterial cellulose synthesis. The sequence is that of Cellulose synthase operon protein C (bscS) from Pseudomonas fluorescens (strain SBW25).